The following is a 390-amino-acid chain: Succinate--CoA ligase [ADP-forming] subunit beta (390 aa).

The region spanning 9-245 (KHLLKKYNIP…TTQEDEHETM (237 aa)) is the ATP-grasp domain. ATP is bound by residues Lys-46, 53–55 (GRG), Glu-99, Ser-102, and Glu-107. Residues Asn-200 and Asp-214 each contribute to the Mg(2+) site. Residues Asn-265 and 322 to 324 (GIV) contribute to the substrate site.

It belongs to the succinate/malate CoA ligase beta subunit family. As to quaternary structure, heterotetramer of two alpha and two beta subunits. Requires Mg(2+) as cofactor.

It catalyses the reaction succinate + ATP + CoA = succinyl-CoA + ADP + phosphate. The catalysed reaction is GTP + succinate + CoA = succinyl-CoA + GDP + phosphate. The protein operates within carbohydrate metabolism; tricarboxylic acid cycle; succinate from succinyl-CoA (ligase route): step 1/1. Functionally, succinyl-CoA synthetase functions in the citric acid cycle (TCA), coupling the hydrolysis of succinyl-CoA to the synthesis of either ATP or GTP and thus represents the only step of substrate-level phosphorylation in the TCA. The beta subunit provides nucleotide specificity of the enzyme and binds the substrate succinate, while the binding sites for coenzyme A and phosphate are found in the alpha subunit. This Coxiella burnetii (strain RSA 493 / Nine Mile phase I) protein is Succinate--CoA ligase [ADP-forming] subunit beta.